The primary structure comprises 269 residues: Hemin import ATP-binding protein HmuV (269 aa).

The 238-residue stretch at 5-242 (IETHSVTMRI…GLIRKVFEVC (238 aa)) folds into the ABC transporter domain. 37–44 (GPNGAGKS) contributes to the ATP binding site.

The protein belongs to the ABC transporter superfamily. Heme (hemin) importer (TC 3.A.1.14.5) family. The complex is composed of two ATP-binding proteins (HmuV), two transmembrane proteins (HmuU) and a solute-binding protein (HmuT).

The protein localises to the cell inner membrane. Functionally, part of the ABC transporter complex HmuTUV involved in hemin import. Responsible for energy coupling to the transport system. This chain is Hemin import ATP-binding protein HmuV, found in Nitrobacter winogradskyi (strain ATCC 25391 / DSM 10237 / CIP 104748 / NCIMB 11846 / Nb-255).